Consider the following 287-residue polypeptide: 4-hydroxybenzoate octaprenyltransferase (287 aa).

Helical transmembrane passes span 30 to 50 (ALWIASDGHPAPSLVVIFALG), 92 to 112 (IAIAVGLALVSFLLILPLNGL), 133 to 153 (FFAIPQAYLGIAFGFGIPMAF), 158 to 178 (DTVPMIAWAMLAANVFWSVAY), 207 to 227 (VLAIMLCYAAMLGIYVWLGAA), 232 to 252 (WPYWAGWAAAAGCSIYHYTLI), and 266 to 286 (HNNWLGGVLFAGIAAHYALAV).

This sequence belongs to the UbiA prenyltransferase family. Mg(2+) is required as a cofactor.

Its subcellular location is the cell inner membrane. It catalyses the reaction all-trans-octaprenyl diphosphate + 4-hydroxybenzoate = 4-hydroxy-3-(all-trans-octaprenyl)benzoate + diphosphate. It functions in the pathway cofactor biosynthesis; ubiquinone biosynthesis. Its function is as follows. Catalyzes the prenylation of para-hydroxybenzoate (PHB) with an all-trans polyprenyl group. Mediates the second step in the final reaction sequence of ubiquinone-8 (UQ-8) biosynthesis, which is the condensation of the polyisoprenoid side chain with PHB, generating the first membrane-bound Q intermediate 3-octaprenyl-4-hydroxybenzoate. The chain is 4-hydroxybenzoate octaprenyltransferase from Burkholderia mallei (strain NCTC 10247).